We begin with the raw amino-acid sequence, 605 residues long: Poly [ADP-ribose] polymerase 2-B (605 aa).

The interval Asn96–Asp122 is disordered. A compositionally biased stretch (basic and acidic residues) spans Asp108–Asp122. In terms of domain architecture, WGR spans Ala153–Phe260. A PARP alpha-helical domain is found at Glu250–Glu370. The PARP catalytic domain occupies His378–Gly605.

It belongs to the ARTD/PARP family.

It localises to the nucleus. It catalyses the reaction NAD(+) + (ADP-D-ribosyl)n-acceptor = nicotinamide + (ADP-D-ribosyl)n+1-acceptor + H(+).. The catalysed reaction is L-aspartyl-[protein] + NAD(+) = 4-O-(ADP-D-ribosyl)-L-aspartyl-[protein] + nicotinamide. It carries out the reaction L-glutamyl-[protein] + NAD(+) = 5-O-(ADP-D-ribosyl)-L-glutamyl-[protein] + nicotinamide. Involved in the base excision repair (BER) pathway, by catalyzing the poly(ADP-ribosyl)ation of a limited number of acceptor proteins involved in chromatin architecture and in DNA metabolism. This modification follows DNA damages and appears as an obligatory step in a detection/signaling pathway leading to the reparation of DNA strand breaks. The chain is Poly [ADP-ribose] polymerase 2-B (PARP2-B) from Oryza sativa subsp. japonica (Rice).